The chain runs to 365 residues: Peptide chain release factor 2 (365 aa).

At Gln-251 the chain carries N5-methylglutamine.

Belongs to the prokaryotic/mitochondrial release factor family. Post-translationally, methylated by PrmC. Methylation increases the termination efficiency of RF2.

The protein resides in the cytoplasm. In terms of biological role, peptide chain release factor 2 directs the termination of translation in response to the peptide chain termination codons UGA and UAA. The polypeptide is Peptide chain release factor 2 (Campylobacter jejuni subsp. jejuni serotype O:6 (strain 81116 / NCTC 11828)).